The following is a 318-amino-acid chain: MDVVVYAPASIGNVSVGFDVLGAAVSPVDGTLLGDRVMVKAGDEPFSLKTAGSFVSKLPTETKENIVYDCWVVFSRELDKKGISVKSLEMTLEKNMPIGSGLGSSACSIVAALDALNRFHGQPLNETELLALMGEMEGKISGGIHYDNVAPCYLGGVQLMLEELGIISQEVPCFDDWYWVMAYPGIKVSTAEAREILPSQYRRQDVIAHGRHLAGFIHACHSGQPELAAKMIKDVIAEPYREKLLPGFADARKYATSAGALATGISGSGPTLFSICKEQDVAERVARWLEQNYVQNEEGFVHVCRLDKQGSIVTGSEL.

An ATP-binding site is contributed by 97 to 107; sequence PIGSGLGSSAC.

It belongs to the GHMP kinase family. Homoserine kinase subfamily.

It is found in the cytoplasm. It carries out the reaction L-homoserine + ATP = O-phospho-L-homoserine + ADP + H(+). It functions in the pathway amino-acid biosynthesis; L-threonine biosynthesis; L-threonine from L-aspartate: step 4/5. Functionally, catalyzes the ATP-dependent phosphorylation of L-homoserine to L-homoserine phosphate. The sequence is that of Homoserine kinase from Vibrio atlanticus (strain LGP32) (Vibrio splendidus (strain Mel32)).